We begin with the raw amino-acid sequence, 529 residues long: GMP synthase [glutamine-hydrolyzing] (529 aa).

In terms of domain architecture, Glutamine amidotransferase type-1 spans 9 to 211 (RILILDFGSQ…VKDICGCECL (203 aa)). Residue Cys-86 is the Nucleophile of the active site. Residues His-185 and Glu-187 contribute to the active site. The 193-residue stretch at 212–404 (WTPATIIDDA…LGLPYDMLYR (193 aa)) folds into the GMPS ATP-PPase domain. Position 239 to 245 (239 to 245 (SGGVDSS)) interacts with ATP.

Homodimer.

The catalysed reaction is XMP + L-glutamine + ATP + H2O = GMP + L-glutamate + AMP + diphosphate + 2 H(+). The protein operates within purine metabolism; GMP biosynthesis; GMP from XMP (L-Gln route): step 1/1. Its function is as follows. Catalyzes the synthesis of GMP from XMP. This chain is GMP synthase [glutamine-hydrolyzing], found in Aeromonas hydrophila subsp. hydrophila (strain ATCC 7966 / DSM 30187 / BCRC 13018 / CCUG 14551 / JCM 1027 / KCTC 2358 / NCIMB 9240 / NCTC 8049).